We begin with the raw amino-acid sequence, 204 residues long: Cysteine-rich protein 3 (204 aa).

In terms of domain architecture, LIM zinc-binding 1 spans 3–64; it reads WTCPRCQQPV…KPCYGALFGP (62 aa). Residues 88–107 are disordered; it reads ISLSPSNFSPPRPRTGLSRA. An LIM zinc-binding 2 domain is found at 122–183; the sequence is SLCPGCGDPV…IPCYGYLFGP (62 aa).

Expressed specifically by the thymus.

Its subcellular location is the cytoplasm. This chain is Cysteine-rich protein 3 (Crip3), found in Mus musculus (Mouse).